The primary structure comprises 161 residues: Phosphopantetheine adenylyltransferase (161 aa).

Position 10 (Thr10) interacts with substrate. ATP-binding positions include 10–11 (TF) and His18. Substrate contacts are provided by Lys42, Leu75, and Arg89. Residues 90-92 (GLR), Glu100, and 125-131 (YSFLSSS) contribute to the ATP site.

The protein belongs to the bacterial CoaD family. As to quaternary structure, homohexamer. The cofactor is Mg(2+).

Its subcellular location is the cytoplasm. The catalysed reaction is (R)-4'-phosphopantetheine + ATP + H(+) = 3'-dephospho-CoA + diphosphate. It functions in the pathway cofactor biosynthesis; coenzyme A biosynthesis; CoA from (R)-pantothenate: step 4/5. Reversibly transfers an adenylyl group from ATP to 4'-phosphopantetheine, yielding dephospho-CoA (dPCoA) and pyrophosphate. This Thermodesulfovibrio yellowstonii (strain ATCC 51303 / DSM 11347 / YP87) protein is Phosphopantetheine adenylyltransferase.